The primary structure comprises 675 residues: Polyphosphate kinase (675 aa).

N42 is an ATP binding site. Residues R372 and R401 each coordinate Mg(2+). The Phosphohistidine intermediate role is filled by H431. Residues Y464, R558, and H586 each contribute to the ATP site.

The protein belongs to the polyphosphate kinase 1 (PPK1) family. Requires Mg(2+) as cofactor. In terms of processing, an intermediate of this reaction is the autophosphorylated ppk in which a phosphate is covalently linked to a histidine residue through a N-P bond.

The enzyme catalyses [phosphate](n) + ATP = [phosphate](n+1) + ADP. Its function is as follows. Catalyzes the reversible transfer of the terminal phosphate of ATP to form a long-chain polyphosphate (polyP). This is Polyphosphate kinase from Helicobacter pylori (strain ATCC 700392 / 26695) (Campylobacter pylori).